A 304-amino-acid polypeptide reads, in one-letter code: MEQLTPLIKRFTFKRQDGQNFPRFSGGSHIIVKMNEQISNAYSLMSCTQDLSTYQVCVRKDVEGKGGSVFMHDQCNEGCEIQISEPKNLFPLAETGNKHILIAGGIGITPFLPQMDELAARGADFELHYAYRSPEHAALLDELKQKHAKHVFSYVDSEGCSLKLDELISSQPKGTHVYVCGPKPMIDAVIDCCNKHRYRDEYIHWEQFASTVPEDGEAFTVVLAKSNQEIEVQSNQTILQAIETLNIDVECLCREGVCGTCETAILEGEADHFDQYLSDAEKASQKSMMICVSRAKGKKLVLDL.

Residues 1–93 (MEQLTPLIKR…SEPKNLFPLA (93 aa)) form the FAD-binding FR-type domain. The region spanning 219 to 304 (FTVVLAKSNQ…AKGKKLVLDL (86 aa)) is the 2Fe-2S ferredoxin-type domain. Residues Cys-253, Cys-258, Cys-261, and Cys-291 each contribute to the [2Fe-2S] cluster site.

The protein belongs to the PDR/VanB family. CntB subfamily. In terms of assembly, composed of an oxygenase subunit and a reductase subunit. Requires FMN as cofactor. [2Fe-2S] cluster is required as a cofactor.

It catalyses the reaction (R)-carnitine + NADH + O2 + H(+) = (3R)-3-hydroxy-4-oxobutanoate + trimethylamine + NAD(+) + H2O. It carries out the reaction (R)-carnitine + NADPH + O2 + H(+) = (3R)-3-hydroxy-4-oxobutanoate + trimethylamine + NADP(+) + H2O. The protein operates within amine and polyamine metabolism; carnitine metabolism. With respect to regulation, inhibited by EDTA. Converts carnitine to trimethylamine and malic semialdehyde. Acts on both enantiomers. The polypeptide is Carnitine monooxygenase reductase subunit (Acinetobacter pittii (strain PHEA-2)).